A 99-amino-acid chain; its full sequence is NADH-quinone oxidoreductase subunit K (99 aa).

Helical transmembrane passes span 3 to 23 (PDNY…GVML), 28 to 48 (IVVF…FVTF), and 59 to 79 (VIAF…LGII).

The protein belongs to the complex I subunit 4L family. NDH-1 is composed of 14 different subunits. Subunits NuoA, H, J, K, L, M, N constitute the membrane sector of the complex.

It is found in the cell membrane. The catalysed reaction is a quinone + NADH + 5 H(+)(in) = a quinol + NAD(+) + 4 H(+)(out). NDH-1 shuttles electrons from NADH, via FMN and iron-sulfur (Fe-S) centers, to quinones in the respiratory chain. The immediate electron acceptor for the enzyme in this species is believed to be a menaquinone. Couples the redox reaction to proton translocation (for every two electrons transferred, four hydrogen ions are translocated across the cytoplasmic membrane), and thus conserves the redox energy in a proton gradient. The sequence is that of NADH-quinone oxidoreductase subunit K from Mycobacteroides abscessus (strain ATCC 19977 / DSM 44196 / CCUG 20993 / CIP 104536 / JCM 13569 / NCTC 13031 / TMC 1543 / L948) (Mycobacterium abscessus).